The following is a 363-amino-acid chain: Flagellar P-ring protein (363 aa).

A signal peptide spans 1 to 20 (MKLKLILAVAMLAFSLPSQA).

This sequence belongs to the FlgI family. As to quaternary structure, the basal body constitutes a major portion of the flagellar organelle and consists of four rings (L,P,S, and M) mounted on a central rod.

Its subcellular location is the periplasm. It localises to the bacterial flagellum basal body. In terms of biological role, assembles around the rod to form the L-ring and probably protects the motor/basal body from shearing forces during rotation. This is Flagellar P-ring protein from Shewanella sp. (strain MR-4).